The sequence spans 947 residues: Nonribosomal peptide synthetase ucdA (947 aa).

An adenylation (A) domain region spans residues 25-413 (YSPHANAGYC…AGPVVFKEYF (389 aa)). Positions 585–665 (APENEFERDL…DLGTALRKLQ (81 aa)) constitute a Carrier domain. At S623 the chain carries O-(pantetheine 4'-phosphoryl)serine. The segment at 684–934 (PLWLVHPGVG…MLSPEHVFDF (251 aa)) is thioesterase (TE) domain.

It belongs to the NRP synthetase family.

The enzyme catalyses 2 3-(4-hydroxyphenyl)pyruvate + 2 ATP = atromentin + 2 AMP + 2 diphosphate + H(+). Its pathway is secondary metabolite biosynthesis. Nonribosomal peptide synthetase that mediates the biosynthesis of usterphenyllins and uscandidusins, p-terphenyl derivatives. Within the pathway, ucdA condenses two 4-hydroxyphenylpyruvate (HPPA) units to produce atromentin. UcdA first activates HPPA through its A domain to AMP-HPPA. The HPPA unit is then loaded to the T domain and eventually transferred to the TE domain. Another HPPA unit is then loaded onto the T domain. The TE domain then catalyzes the condensation of the two HPPA units and the release of atromentin via cyclization. The pathway begin with the biosynthesis of 4-hydroxyphenylpyruvate (HPPA) from L-tyrosine, possibly by the aminotransferase ucdG. The nonribosomal peptide synthetase ucdA then condenses two HPPA units to produce atromentin. The key step in this pathway is the reduction and dehydration of atromentin to form a terphenyl triol intermediate, performed by the NAD-dependent dehydrogenase ucdB. Further O-methylation by the methyltransferase ucdC forms terphenyllin carrying two methoxy moieties at C-9 and C-12, and subsequent dihydroxylation at C-3 of ring A and C-15 of ring C by the flavin-dependent oxygenase ucdD leads to 3,15-dihydroxyterphenyllin. Prenylation by ucdE at position C-5 of ring A forms usterphenyllin B, and is followed by a second prenylation at position C-14 of ring C to form usterphenyllin A. The following furan ring formation that leads to uscandidusins A and B was proven to be an unexpected spontaneous non-enzymatic reaction. This Aspergillus ustus protein is Nonribosomal peptide synthetase ucdA.